The chain runs to 339 residues: Acyl-CoA dehydrogenase FadE28 (339 aa).

Arg227, Gln238, His295, and Gly299 together coordinate FAD.

The protein belongs to the acyl-CoA dehydrogenase family. Heterotetramer composed of FadE28 and FadE29. It depends on FAD as a cofactor.

The enzyme catalyses 3-oxochol-4-en-22-oyl-CoA + A = 3-oxochola-4,17-dien-22-oyl-CoA + AH2. It functions in the pathway steroid metabolism; cholesterol degradation. In terms of biological role, involved in the third cycle of side chain dehydrogenation in the beta-oxidation of cholesterol catabolism. May play an important role for the initial macrophage invasion, possibly in response to the acidification of phagosome. It contributes partly to the virulence by increasing the efficiency of beta-oxidation. Catalyzes the dehydrogenation of 2'-propanoyl-CoA ester side chains of 3-oxo-4-pregnene-20-carboxyl-CoA (3-OPC-CoA) to yield 3-oxo-4,17-pregnadiene-20-carboxyl-CoA (3-OPDC-CoA). Also able to dehydrogenate steroyl-CoA such as 3-oxo-chol-4-en-24-oyl-CoA (3-OCO-CoA), 1beta-(2'-propanoyl-CoA)-3a-alpha-H-7a-beta-methylhexahydro-4-indanone (indanone-CoA ester), hexahydroindanone and pregenenone. In Mycobacterium tuberculosis (strain ATCC 25618 / H37Rv), this protein is Acyl-CoA dehydrogenase FadE28 (fadE28).